Reading from the N-terminus, the 367-residue chain is MAQMLLRGSMSRVAGRCRSEFGDLPNWCLSTTTHHQEDLKKLGKILTEAATEDKTVIITTLNKAWSEPNSTFDLFLHSFHVGKGTKPLLRHLVVACLDEEAYSRCSEVHPHRCYFMKTPGIDFAGDKMFMTPDYLKMMWRRIEFLGTLLKLRYNFIFTIPFPRLSKEVDFQIACDRYSGDDKDIHNAVNGGFAFVKANQRTIDFYNYWYMSRLRYPDRHDQDVLDQIKGGGYPAKIGLKMRFLDTKYFGGFCEPSRDLDKVCTMHANCCVGLENKIKDLRQVIVDWENYVSAAKTTDGQIMTWRDPENCMKQWWWRNKTKQVLSENSKENYLNIMLFIKTYIILNFCLPMNNIRKFFFCFGSIFVNR.

This is an uncharacterized protein from Arabidopsis thaliana (Mouse-ear cress).